The chain runs to 191 residues: ADP-ribosylation factor (191 aa).

A lipid anchor (N-myristoyl glycine) is attached at Gly-2. Residues 24-31 (GLDAAGKT), 67-71 (DVGGQ), and 128-131 (NKQD) contribute to the GTP site.

It belongs to the small GTPase superfamily. Arf family.

Its subcellular location is the golgi apparatus. Functionally, GTP-binding protein involved in protein trafficking; may modulate vesicle budding and uncoating within the Golgi apparatus. This Giardia intestinalis (Giardia lamblia) protein is ADP-ribosylation factor.